Reading from the N-terminus, the 165-residue chain is Ribosome maturation factor RimM (165 aa).

Residues 94–165 (EDEFYIADLT…YVILNYQREA (72 aa)) enclose the PRC barrel domain.

Belongs to the RimM family. Binds ribosomal protein uS19.

The protein resides in the cytoplasm. An accessory protein needed during the final step in the assembly of 30S ribosomal subunit, possibly for assembly of the head region. Essential for efficient processing of 16S rRNA. May be needed both before and after RbfA during the maturation of 16S rRNA. It has affinity for free ribosomal 30S subunits but not for 70S ribosomes. The chain is Ribosome maturation factor RimM from Rickettsia conorii (strain ATCC VR-613 / Malish 7).